Reading from the N-terminus, the 192-residue chain is Ribosomal RNA small subunit methyltransferase G (192 aa).

Residues glycine 63, phenylalanine 68, 112 to 113 (IE), and arginine 125 each bind S-adenosyl-L-methionine.

Belongs to the methyltransferase superfamily. RNA methyltransferase RsmG family.

It is found in the cytoplasm. It carries out the reaction guanosine(527) in 16S rRNA + S-adenosyl-L-methionine = N(7)-methylguanosine(527) in 16S rRNA + S-adenosyl-L-homocysteine. Its function is as follows. Specifically methylates the N7 position of guanine in position 527 of 16S rRNA. This is Ribosomal RNA small subunit methyltransferase G from Rickettsia felis (strain ATCC VR-1525 / URRWXCal2) (Rickettsia azadi).